Here is a 402-residue protein sequence, read N- to C-terminus: Propionate kinase (402 aa).

Asn11 and Lys18 together coordinate ATP. Asn11 provides a ligand contact to Mg(2+). Arg86 lines the substrate pocket. Asp143 (proton donor/acceptor) is an active-site residue. Residues His175, 203–207, 278–280, and 326–330 each bind ATP; these read HLGNG, DLR, and GIGEN.

The protein belongs to the acetokinase family. TdcD subfamily. As to quaternary structure, homodimer. Mg(2+) is required as a cofactor.

The catalysed reaction is propanoate + ATP = propanoyl phosphate + ADP. The protein operates within amino-acid degradation; L-threonine degradation via propanoate pathway; propanoate from L-threonine: step 4/4. Functionally, catalyzes the conversion of propionyl phosphate and ADP to propionate and ATP. This chain is Propionate kinase, found in Escherichia coli O6:H1 (strain CFT073 / ATCC 700928 / UPEC).